Reading from the N-terminus, the 147-residue chain is Hemoglobin subunit beta-1 (147 aa).

The Globin domain maps to 3–147; sequence EWTDKERSII…VVSALGKQYH (145 aa). Heme b-binding residues include histidine 64 and histidine 93.

The protein belongs to the globin family. As to quaternary structure, heterotetramer of two alpha chains and two beta chains. Red blood cells.

Involved in oxygen transport from gills to the various peripheral tissues. The polypeptide is Hemoglobin subunit beta-1 (hbb1) (Pagothenia borchgrevinki (Bald rockcod)).